A 279-amino-acid chain; its full sequence is Putative methyltransferase Jann_4284 (279 aa).

The chain is Putative methyltransferase Jann_4284 from Jannaschia sp. (strain CCS1).